The chain runs to 324 residues: Transcription factor MYB74 (324 aa).

2 HTH myb-type domains span residues 10–62 and 63–117; these read KNGL…TNYL and RPDI…RKRL. 2 DNA-binding regions (H-T-H motif) span residues 38–62 and 90–113; these read WRTL…TNYL and WSAI…NTHI.

In terms of tissue distribution, highly expressed in flowers and at lower levels in rosette leaves and cauline leaves. Expressed at low levels in roots, stems and siliques.

It is found in the nucleus. In terms of biological role, probable transcription factor that may function in salt stress response. The polypeptide is Transcription factor MYB74 (Arabidopsis thaliana (Mouse-ear cress)).